A 517-amino-acid chain; its full sequence is Fatty acyl-CoA reductase wat (517 aa).

2 helical membrane-spanning segments follow: residues Ile378–Ile398 and Val492–Leu512.

Belongs to the fatty acyl-CoA reductase family.

It is found in the apical cell membrane. The enzyme catalyses a long-chain fatty acyl-CoA + 2 NADPH + 2 H(+) = a long-chain primary fatty alcohol + 2 NADP(+) + CoA. Its function is as follows. Catalyzes the reduction of saturated fatty acyl-CoA to fatty alcohols. The preferred substrates are C24:0 and C26:0. Necessary for the final stages of tracheal maturation, to facilitate the transition from water-filled to gas-filled tubes. May help to maintain the integrity of the outer hydrophobic envelope of the trachea. This is Fatty acyl-CoA reductase wat from Drosophila melanogaster (Fruit fly).